The sequence spans 339 residues: MVLQKNWQSLIKPEKLEVEPGGEPLRTATVVAEPLERGFGMTLGNAIRRVLLSSLQGAAVTAIQIDGVLHEFSSVAGVREDVTDIVLNVKQLALRMHGEGPKRMVLTATGPGEVRAGQIQTGHDIEVMNPDLVICTLDEGVKFGMEFTVNLGKGYVPAAANRPEDAPIGLIPVDAIYSPVRRVSYKVEPTRVGQVTDYDRLLLTVETNGAVTPEDAVALAARILQDQLQLFINFDEPRPVRTEEPQDDLPFNRNLLRKVDELELSVRSANCLKNDNIVYIGDLVQKTEQEMLRTPNFGRKSLNEIKEVLTSMGLSLGMNVPAWPPENIEDLAKRLDEPF.

Residues Met-1–Asp-235 are alpha N-terminal domain (alpha-NTD). The interval Phe-251 to Phe-339 is alpha C-terminal domain (alpha-CTD).

Belongs to the RNA polymerase alpha chain family. As to quaternary structure, homodimer. The RNAP catalytic core consists of 2 alpha, 1 beta, 1 beta' and 1 omega subunit. When a sigma factor is associated with the core the holoenzyme is formed, which can initiate transcription.

The catalysed reaction is RNA(n) + a ribonucleoside 5'-triphosphate = RNA(n+1) + diphosphate. In terms of biological role, DNA-dependent RNA polymerase catalyzes the transcription of DNA into RNA using the four ribonucleoside triphosphates as substrates. In Gluconacetobacter diazotrophicus (strain ATCC 49037 / DSM 5601 / CCUG 37298 / CIP 103539 / LMG 7603 / PAl5), this protein is DNA-directed RNA polymerase subunit alpha.